A 187-amino-acid polypeptide reads, in one-letter code: UPF0340 protein SMU_87 (187 aa).

It belongs to the UPF0340 family.

This is UPF0340 protein SMU_87 from Streptococcus mutans serotype c (strain ATCC 700610 / UA159).